The primary structure comprises 366 residues: Fe-S cluster assembly protein DRE2 (366 aa).

Residues 8-167 (AQGSGRFLLL…KPDFGAQQAV (160 aa)) form an N-terminal SAM-like domain region. The segment at 100–136 (RNRDNQIWGSGSDSAAGLGSSDGGGGGGGGEKKSSSE) is disordered. Residues 108–118 (GSGSDSAAGLG) are compositionally biased toward low complexity. Residues 119-128 (SSDGGGGGGG) are compositionally biased toward gly residues. The interval 168–258 (PLKLGRKKNL…EEELLGEFDM (91 aa)) is linker. Residues Cys268, Cys279, Cys282, and Cys284 each contribute to the [2Fe-2S] cluster site. A fe-S binding site A region spans residues 268 to 284 (CRPKAGKRRRACKDCTC). [4Fe-4S] cluster contacts are provided by Cys329, Cys332, Cys340, and Cys343. Short sequence motifs (cx2C motif) lie at residues 329-332 (CGNC) and 340-343 (CDGC). The interval 329 to 343 (CGNCALGDAFRCDGC) is fe-S binding site B.

The protein belongs to the anamorsin family. As to quaternary structure, monomer. Interacts with TAH18. Interacts with MIA40. The cofactor is [2Fe-2S] cluster. Requires [4Fe-4S] cluster as cofactor.

The protein resides in the cytoplasm. It is found in the mitochondrion intermembrane space. Component of the cytosolic iron-sulfur (Fe-S) protein assembly (CIA) machinery required for the maturation of extramitochondrial Fe-S proteins. Part of an electron transfer chain functioning in an early step of cytosolic Fe-S biogenesis, facilitating the de novo assembly of a [4Fe-4S] cluster on the scaffold complex CFD1-NBP35. Electrons are transferred to DRE2 from NADPH via the FAD- and FMN-containing protein TAH18. TAH18-DRE2 are also required for the assembly of the diferric tyrosyl radical cofactor of ribonucleotide reductase (RNR), probably by providing electrons for reduction during radical cofactor maturation in the catalytic small subunit RNR2. The polypeptide is Fe-S cluster assembly protein DRE2 (Paracoccidioides lutzii (strain ATCC MYA-826 / Pb01) (Paracoccidioides brasiliensis)).